The chain runs to 242 residues: uncharacterized protein (242 aa).

Positions 198, 218, and 227 each coordinate S-adenosyl-L-methionine.

It belongs to the class IV-like SAM-binding methyltransferase superfamily. RNA methyltransferase TrmH family.

This is an uncharacterized protein from Mycoplasma pneumoniae (strain ATCC 29342 / M129 / Subtype 1) (Mycoplasmoides pneumoniae).